The sequence spans 294 residues: Octopine-binding periplasmic protein (294 aa).

Residues 1-20 (MRLKSIMCAALFVVAGQAAA) form the signal peptide. Cys-57 and Cys-64 are oxidised to a cystine.

The protein belongs to the bacterial solute-binding protein 3 family.

It localises to the periplasm. In terms of biological role, component of the octopine active transport system probably consisting of four subunits: Q, M, P and T. The protein is Octopine-binding periplasmic protein (occT) of Rhizobium meliloti (Ensifer meliloti).